The chain runs to 266 residues: Vesicle-associated protein 4-1 (266 aa).

A disordered region spans residues 28–57; the sequence is STTSSSSTQNPNQNYRSRHGNRNTDISAVS. An MSP domain is found at 76–199; sequence RLRLDPSSYL…VEQVLRVIFI (124 aa). Residues 200–228 adopt a coiled-coil conformation; that stretch reads DADRPSAALEKLKRQLDEAEAAVEARKKP. A compositionally biased stretch (basic and acidic residues) spans 219–229; that stretch reads EAAVEARKKPP. Positions 219-239 are disordered; it reads EAAVEARKKPPPETGPRVVGE. S264 is modified (phosphoserine).

The protein belongs to the VAMP-associated protein (VAP) (TC 9.B.17) family.

May play a role in vesicle trafficking. The chain is Vesicle-associated protein 4-1 (PVA41) from Arabidopsis thaliana (Mouse-ear cress).